The sequence spans 436 residues: ATP-dependent protease ATPase subunit HslU (436 aa).

ATP contacts are provided by residues Ile18, 60–65, Asp249, Glu314, and Arg386; that span reads GVGKTE.

Belongs to the ClpX chaperone family. HslU subfamily. In terms of assembly, a double ring-shaped homohexamer of HslV is capped on each side by a ring-shaped HslU homohexamer. The assembly of the HslU/HslV complex is dependent on binding of ATP.

It localises to the cytoplasm. Functionally, ATPase subunit of a proteasome-like degradation complex; this subunit has chaperone activity. The binding of ATP and its subsequent hydrolysis by HslU are essential for unfolding of protein substrates subsequently hydrolyzed by HslV. HslU recognizes the N-terminal part of its protein substrates and unfolds these before they are guided to HslV for hydrolysis. The chain is ATP-dependent protease ATPase subunit HslU from Chelativorans sp. (strain BNC1).